The primary structure comprises 133 residues: Nickel-responsive regulator (133 aa).

The Ni(2+) site is built by His-76, His-87, His-89, and Cys-95.

Belongs to the transcriptional regulatory CopG/NikR family. In terms of assembly, homotetramer. Ni(2+) is required as a cofactor.

In terms of biological role, transcriptional repressor of the nikABCDE operon. Is active in the presence of excessive concentrations of intracellular nickel. The protein is Nickel-responsive regulator of Salmonella arizonae (strain ATCC BAA-731 / CDC346-86 / RSK2980).